Consider the following 181-residue polypeptide: Mating-type M-specific polypeptide Mc (181 aa).

The segment at residues 103–171 (TPRPPNAFIL…QHQKMYPGYK (69 aa)) is a DNA-binding region (HMG box).

Its subcellular location is the nucleus. The protein resides in the cytoplasm. The protein localises to the cytoskeleton. It is found in the microtubule organizing center. It localises to the spindle pole body. Its function is as follows. Mating type proteins are sequence specific DNA-binding proteins that act as master switches in yeast differentiation by controlling gene expression in a cell type-specific fashion. Positive regulator of MFM genes. The HMG box recognizes the DNA sequence 5'-AACAAAG-3'. Required for conjugation and efficient meiosis. This chain is Mating-type M-specific polypeptide Mc (mat3-Mc), found in Schizosaccharomyces pombe (Fission yeast).